The sequence spans 211 residues: NADH-quinone oxidoreductase subunit A (211 aa).

The next 3 helical transmembrane spans lie at 7–27 (WSALAFILAAIGLVIFMLVVP), 61–81 (FYLVAIFFVIFDLEALYLYAY), and 88–108 (VGWIGYATALIFVVDLLIGLI).

The protein belongs to the complex I subunit 3 family. NDH-1 is composed of 14 different subunits. Subunits NuoA, H, J, K, L, M, N constitute the membrane sector of the complex.

It localises to the cell inner membrane. The enzyme catalyses a quinone + NADH + 5 H(+)(in) = a quinol + NAD(+) + 4 H(+)(out). In terms of biological role, NDH-1 shuttles electrons from NADH, via FMN and iron-sulfur (Fe-S) centers, to quinones in the respiratory chain. The immediate electron acceptor for the enzyme in this species is believed to be ubiquinone. Couples the redox reaction to proton translocation (for every two electrons transferred, four hydrogen ions are translocated across the cytoplasmic membrane), and thus conserves the redox energy in a proton gradient. This is NADH-quinone oxidoreductase subunit A from Psychrobacter sp. (strain PRwf-1).